Here is a 268-residue protein sequence, read N- to C-terminus: HTH-type transcriptional activator RhaS (268 aa).

One can recognise an HTH araC/xylS-type domain in the interval 171–268 (RQMIRWLENN…YSIAPRELRI (98 aa)). 2 consecutive DNA-binding regions (H-T-H motif) follow at residues 188–209 (EELA…KSQT) and 236–259 (IINI…KNEY).

Binds DNA as a dimer.

It localises to the cytoplasm. Its function is as follows. Activates expression of the rhaBAD and rhaT operons. The sequence is that of HTH-type transcriptional activator RhaS from Mannheimia succiniciproducens (strain KCTC 0769BP / MBEL55E).